The sequence spans 122 residues: Large ribosomal subunit protein bL17 (122 aa).

This sequence belongs to the bacterial ribosomal protein bL17 family. As to quaternary structure, part of the 50S ribosomal subunit. Contacts protein L32.

The sequence is that of Large ribosomal subunit protein bL17 from Nautilia profundicola (strain ATCC BAA-1463 / DSM 18972 / AmH).